The following is a 384-amino-acid chain: S-adenosylmethionine synthase (384 aa).

ATP is bound at residue His15. Residue Asp17 participates in Mg(2+) binding. Glu43 serves as a coordination point for K(+). The L-methionine site is built by Glu56 and Gln99. A flexible loop region spans residues 99–109 (QSPDINQGVDK). ATP contacts are provided by residues 164 to 166 (DAK), 230 to 231 (RF), Asp239, 245 to 246 (RK), Ala262, and Lys266. Asp239 contacts L-methionine. Lys270 serves as a coordination point for L-methionine.

This sequence belongs to the AdoMet synthase family. Homotetramer; dimer of dimers. The cofactor is Mg(2+). K(+) is required as a cofactor.

It is found in the cytoplasm. The catalysed reaction is L-methionine + ATP + H2O = S-adenosyl-L-methionine + phosphate + diphosphate. Its pathway is amino-acid biosynthesis; S-adenosyl-L-methionine biosynthesis; S-adenosyl-L-methionine from L-methionine: step 1/1. In terms of biological role, catalyzes the formation of S-adenosylmethionine (AdoMet) from methionine and ATP. The overall synthetic reaction is composed of two sequential steps, AdoMet formation and the subsequent tripolyphosphate hydrolysis which occurs prior to release of AdoMet from the enzyme. The polypeptide is S-adenosylmethionine synthase (Aliivibrio salmonicida (strain LFI1238) (Vibrio salmonicida (strain LFI1238))).